We begin with the raw amino-acid sequence, 431 residues long: C2H2 type master regulator of conidiophore development brlA (431 aa).

Disordered stretches follow at residues 29-51, 211-275, and 287-306; these read MTSSFSPLESPTPTPTSLYSHGS, TPQQ…SEEY, and IRTHRQPSRKPSKKQLVRSN. Residues 30 to 48 are compositionally biased toward low complexity; sequence TSSFSPLESPTPTPTSLYS. The span at 225-265 shows a compositional bias: polar residues; the sequence is PSSNYSDFPASLQTFKPHTPSTPVRSLSLGTPRSDTPQSRM. Residues 287–302 are compositionally biased toward basic residues; sequence IRTHRQPSRKPSKKQL. C2H2-type zinc fingers lie at residues 321–345 and 351–376; these read FKCKEPGCKGRFKRQEHLKRHMKSH and HVCWVPGCHRAFSRSDNLNAHYTKTH. Positions 390-412 are disordered; the sequence is DETSPDYDPEFRGQLTPDGRPIY.

The protein resides in the nucleus. BrlA, abaA and wetA are pivotal regulators of conidiophore development and conidium maturation. They act individually and together to regulate their own expression and that of numerous other sporulation-specific genes. Binds promoters of target genes at brlA response elements (BREs) containing the conserved sequence 5'-(C/A)(A/G)AGGG(G/A)-3'. Regulates the expression levels of seven secondary metabolism gene clusters including a down-regulated cluster putatively involved in the biosynthesis of the mycotoxins roquefortine C and meleagrin. Negatively regulates the expression of cellulase genes. This chain is C2H2 type master regulator of conidiophore development brlA, found in Penicillium oxalicum (strain 114-2 / CGMCC 5302) (Penicillium decumbens).